A 347-amino-acid polypeptide reads, in one-letter code: Anthranilate phosphoribosyltransferase (347 aa).

Residues glycine 88, 91-92, threonine 96, 98-101, 116-124, and serine 128 contribute to the 5-phospho-alpha-D-ribose 1-diphosphate site; these read GD, NIST, and KHGNRSVSS. Glycine 88 provides a ligand contact to anthranilate. Position 100 (serine 100) interacts with Mg(2+). Anthranilate is bound at residue asparagine 119. An anthranilate-binding site is contributed by arginine 174. Mg(2+) contacts are provided by aspartate 232 and glutamate 233.

This sequence belongs to the anthranilate phosphoribosyltransferase family. In terms of assembly, homodimer. Mg(2+) is required as a cofactor.

It carries out the reaction N-(5-phospho-beta-D-ribosyl)anthranilate + diphosphate = 5-phospho-alpha-D-ribose 1-diphosphate + anthranilate. Its pathway is amino-acid biosynthesis; L-tryptophan biosynthesis; L-tryptophan from chorismate: step 2/5. Functionally, catalyzes the transfer of the phosphoribosyl group of 5-phosphorylribose-1-pyrophosphate (PRPP) to anthranilate to yield N-(5'-phosphoribosyl)-anthranilate (PRA). The sequence is that of Anthranilate phosphoribosyltransferase from Shewanella sp. (strain MR-7).